We begin with the raw amino-acid sequence, 2091 residues long: MKGHQFKFWIFELREILREIKNSHYFLDSWTQFNSVGSFIHIFFHQEHFIKLFDPRIWSILLSRNSQGSTSNRYFTIKGVVILFVVAVLIYRINSRNMVERKNLYLIGLLPIPMNSIGPRNDTLEESVGSSNINRLIVSLLYLPKGKKISESCFLNPKESTWVLPITKKCSMPESNWGSRWWRNWIGKKRDSSQLKGSSDQSRDPLDSISNEDSEYHTLINQRKIQQLKERSILWDPSFLQTERTEIESDRFPKSLSGYSSMSRLFTEREKQVINHLLPEEIEEFLGNPTRSVRSFFSDRWSELHLGSNPTERSTRDHKLLKKQQDLSFVPSRRSEKKEMVNIFKIITYLQNTVSIHPISSYPGCDMVPKDEPDMDSSNKISFLNKNPFLDLFHLFHDRNMGGYTLHHDFESEERFQEMADLFTLSITEPDLVYHKGFAFSIDSYGLDQKQFLNEVFNSRDESKKKSLLALPPFFYEENESFYRRIIKKWVRISCGNDLEDPKPKKMVFASNNLNVLNRFFLMNRSDRNFEYGIQRDQIGKDTLNHRTRMKYMINQHLSNLKKSQKRWFDPLILISRTERSTNRDPDAYRYKWSNGSNNFQEHLDHFVSERKSRFRVVFDRLRINQYSIDWSEVIDKKGLSKPFRFFLSKSLLFLSKSLLFLSKFLFFLSNSLPFFFVSFGNIPIHRSEIYIYELKGPNDQLCNQLLESIGLQIVHLKKLKPFLLDDHDTSQKSKFLINGGTISPFLFNKIPKWMIYSFHTRNNRRKSFANTDSYFSTIFHDQDYWLNPVKPFHRSSLISSFYKANQLRFLNNPHHFCFYCNKRFPFYVEKARINNSDFTYGQFLNILFIHNKIFSLCVGKKKHAFWGRDTISPIESRVSNIFIPNDFPQGGGDETYNLYKSSHFPSRSDPFVRRAIYSIADISGTPLTEGQIVNFERTYCQPLSDLNLSDSEGKNSHQYLNFNSNMGLIHTPCSEKYLPSEKRKNRSLFLKKYVEKGQMYRTFQRDSAFSTLSKWNLFQTYIPWFLTSTGHKYLNWIFLDTFSGLLPIHLLPIHRLPILSSSQKFVSIFHDIMHVLDISWRILQKKLGLPQRNPIRKISSKCLHNLLLSEEMIHRNNESPLISTHLRSPNVREFLYSILFLLLVAGYLVRTHLIFVSRASSELQIEFEKVKSLMISSYMIELRKLLDRYPTSEPNSFWLKNLFLVALEQLGDSLEEIWGFASGGNMLLGGDSAYGVKSIRSKKKYLNINLIDLISIIPNPISRITFSKNTRHLSHTSKEIYSLIRKRKNVNGDWIDDKIESWVANSDSIDDEEREFLVQLSTLTTEKRIDQILLSLTHSDHLSKNDSGYQMIEQRGAIYLRYLVDIHKKYLMNYEFNTSCLAERRIFLAHYQTITYSQTSCGANSFHLPSHGKPFSLRLALSPSRGILVIGSIGTGRSYLVKYLATNSYVPFITVFLNKFLDNLSEDIDASEDIDASEDIDASEDIDASDDIDRDLHTELELLTMDMMSEKDRFYITLQFELAKAMSPCIIWIPNIHDLDVNESNYFSLGLLVNHLSRDCERCSTRNILVIASTHIPQKVDPALIAPNKLNTCIKIRRLLIPQQRKHFFTLSYTRGFRLEKKMFHTNGFGSITMGSNARDLVALTNEALSISITQKKSIIDTNTIRSAFHRQTWDLRSQVRSVQDHGILFYQIGRAVAQNVLLSNCPIDPISIYIKKKSCNEGDSYLYKWYFELGTSMKKLTILLYLLSCSAGSVAQDLWSLPGPDERNGITSYGLVENDSDLVHGLLQVEGALVGSSRTEKDCSQFDNDRVTLLLRPEPRNPLDMMQNGSCSILDQRFLYEKNESEFEEGEGALDPQQIEEDLFNHIVWAPRIWHPWGILFDCIERPNELGFPYWSRSFRGKRILYDEEDELQENDSEFLQSGTMQYQTRDRSSKEQGFFRISQFIWDPADPLFVLFKDQSSVSVFSHRELFADEEMSKGLLTSQTDPPTSIYKRWFIKKTQEKHFELLINRQRWFRTTSSLSNGSFRSNTLSESYQYLSNLFLSNGTLLDQMTKTLLRKRWLFPDEMKIGFMEQEKDFPFLSRKVMWP.

The segment at 191–210 (DSSQLKGSSDQSRDPLDSIS) is disordered. Residue 1432-1439 (GSIGTGRS) coordinates ATP.

Belongs to the Ycf2 family.

It localises to the plastid. The protein resides in the chloroplast stroma. Functionally, probable ATPase of unknown function. Its presence in a non-photosynthetic plant (Epifagus virginiana) and experiments in tobacco indicate that it has an essential function which is probably not related to photosynthesis. The sequence is that of Protein Ycf2 from Daucus carota (Wild carrot).